Here is a 147-residue protein sequence, read N- to C-terminus: Ponticulin-like protein C2 (147 aa).

The signal sequence occupies residues 1–20; it reads MKFTKPLLLLIVAIIASSNA. The GPI-like-anchor amidated asparagine moiety is linked to residue N118. Residue N118 is glycosylated (N-linked (GlcNAc...) asparagine). The propeptide at 119–147 is removed in mature form; it reads SSESDSSDSTRIGASFALFALALLSMLAL.

The protein belongs to the ponticulin family. The GPI-like-anchor contains a phosphoceramide group, rather than a phosphatidyl group.

The protein localises to the cell membrane. The polypeptide is Ponticulin-like protein C2 (ponC2) (Dictyostelium discoideum (Social amoeba)).